The following is a 378-amino-acid chain: Ribosomal RNA large subunit methyltransferase G (378 aa).

The protein belongs to the methyltransferase superfamily. RlmG family.

It localises to the cytoplasm. It catalyses the reaction guanosine(1835) in 23S rRNA + S-adenosyl-L-methionine = N(2)-methylguanosine(1835) in 23S rRNA + S-adenosyl-L-homocysteine + H(+). In terms of biological role, specifically methylates the guanine in position 1835 (m2G1835) of 23S rRNA. This is Ribosomal RNA large subunit methyltransferase G from Salmonella arizonae (strain ATCC BAA-731 / CDC346-86 / RSK2980).